Consider the following 179-residue polypeptide: Protein GrpE (179 aa).

Belongs to the GrpE family. As to quaternary structure, homodimer.

Its subcellular location is the cytoplasm. Its function is as follows. Participates actively in the response to hyperosmotic and heat shock by preventing the aggregation of stress-denatured proteins, in association with DnaK and GrpE. It is the nucleotide exchange factor for DnaK and may function as a thermosensor. Unfolded proteins bind initially to DnaJ; upon interaction with the DnaJ-bound protein, DnaK hydrolyzes its bound ATP, resulting in the formation of a stable complex. GrpE releases ADP from DnaK; ATP binding to DnaK triggers the release of the substrate protein, thus completing the reaction cycle. Several rounds of ATP-dependent interactions between DnaJ, DnaK and GrpE are required for fully efficient folding. In Rickettsia felis (strain ATCC VR-1525 / URRWXCal2) (Rickettsia azadi), this protein is Protein GrpE.